Here is a 269-residue protein sequence, read N- to C-terminus: 2-dehydro-3-deoxyphosphooctonate aldolase (269 aa).

Belongs to the KdsA family.

The protein localises to the cytoplasm. The catalysed reaction is D-arabinose 5-phosphate + phosphoenolpyruvate + H2O = 3-deoxy-alpha-D-manno-2-octulosonate-8-phosphate + phosphate. It participates in carbohydrate biosynthesis; 3-deoxy-D-manno-octulosonate biosynthesis; 3-deoxy-D-manno-octulosonate from D-ribulose 5-phosphate: step 2/3. Its pathway is bacterial outer membrane biogenesis; lipopolysaccharide biosynthesis. The protein is 2-dehydro-3-deoxyphosphooctonate aldolase of Chlamydia felis (strain Fe/C-56) (Chlamydophila felis).